The primary structure comprises 344 residues: Uroporphyrinogen decarboxylase (344 aa).

Residues 23–27 (RQAGR), aspartate 73, tyrosine 149, threonine 204, and histidine 321 contribute to the substrate site.

Belongs to the uroporphyrinogen decarboxylase family. Homodimer.

Its subcellular location is the cytoplasm. The enzyme catalyses uroporphyrinogen III + 4 H(+) = coproporphyrinogen III + 4 CO2. Its pathway is porphyrin-containing compound metabolism; protoporphyrin-IX biosynthesis; coproporphyrinogen-III from 5-aminolevulinate: step 4/4. In terms of biological role, catalyzes the decarboxylation of four acetate groups of uroporphyrinogen-III to yield coproporphyrinogen-III. This Francisella tularensis subsp. mediasiatica (strain FSC147) protein is Uroporphyrinogen decarboxylase.